The primary structure comprises 982 residues: Pentatricopeptide repeat-containing protein At5g62370 (982 aa).

PPR repeat units lie at residues 94-129 (DSSCYGALIRKLTEMGQPGVAETFYNQRVIGNGIVP), 130-164 (DSSVLDSMVFCLVKLRRFDEARAHLDRIIASGYAP), 165-199 (SRNSSSLVVDELCNQDRFLEAFHCFEQVKERGSGL), 200-234 (WLWCCKRLFKGLCGHGHLNEAIGMLDTLCGMTRMP), 236-270 (PVNLYKSLFYCFCKRGCAAEAEALFDHMEVDGYYV), 271-305 (DKVMYTCLMKEYCKDNNMTMAMRLYLRMVERSFEL), 306-340 (DPCIFNTLIHGFMKLGMLDKGRVMFSQMIKKGVQS), 341-376 (NVFTYHIMIGSYCKEGNVDYALRLFVNNTGSEDISR), 377-411 (NVHCYTNLIFGFYKKGGMDKAVDLLMRMLDNGIVP), 412-446 (DHITYFVLLKMLPKCHELKYAMVILQSILDNGCGI), 476-510 (AAVGLAVVTTALCSQRNYIAALSRIEKMVNLGCTP), 511-545 (LPFSYNSVIKCLFQENIIEDLASLVNIIQELDFVP), 546-580 (DVDTYLIVVNELCKKNDRDAAFAIIDAMEELGLRP), 581-615 (TVAIYSSIIGSLGKQGRVVEAEETFAKMLESGIQP), 616-650 (DEIAYMIMINTYARNGRIDEANELVEEVVKHFLRP), 651-685 (SSFTYTVLISGFVKMGMMEKGCQYLDKMLEDGLSP), 686-720 (NVVLYTALIGHFLKKGDFKFSFTLFGLMGENDIKH), 721-755 (DHIAYITLLSGLWRAMARKKKRQVIVEPGKEKLLQ), 759-789 (RTKPLVSIPSSLGNYGSKSFAMEVIGKVKKS), 793-827 (NLYLHNTIITGYCAAGRLDEAYNHLESMQKEGIVP), 828-858 (NLVTYTILMKSHIEAGDIESAIDLFEGTNCE), 860-894 (DQVMYSTLLKGLCDFKRPLDALALMLEMQKSGINP), 895-929 (NKDSYEKLLQCLCYSRLTMEAVKVVKDMAALDIWP), and 930-964 (RSINHTWLIYILCEEKKLREARALFAIMVQSGRSL).

Belongs to the PPR family. P subfamily.

The polypeptide is Pentatricopeptide repeat-containing protein At5g62370 (Arabidopsis thaliana (Mouse-ear cress)).